A 560-amino-acid chain; its full sequence is uncharacterized protein (560 aa).

The 281-residue stretch at 1 to 281 (MLWNWVALVG…LGSFFHVAMN (281 aa)) folds into the ABC transmembrane type-1 domain. 7 helical membrane-spanning segments follow: residues 2–22 (LWNW…SYIL), 32–52 (LLSA…RAFA), 108–128 (IYFG…LTLF), 138–160 (TAII…NKIA), 168–188 (WSIY…LITL), 223–243 (VSLM…TALL), and 249–269 (QLSV…FIPL). The region spanning 314–547 (VEIKDLHFSY…QGAYAEMFQQ (234 aa)) is the ABC transporter domain. Residue 347–354 (GKSGCGKS) participates in ATP binding.

It belongs to the ABC transporter superfamily.

It localises to the cell inner membrane. This is an uncharacterized protein from Haemophilus influenzae (strain ATCC 51907 / DSM 11121 / KW20 / Rd).